Consider the following 71-residue polypeptide: UPF0346 protein SUB0487 (71 aa).

The protein belongs to the UPF0346 family.

The sequence is that of UPF0346 protein SUB0487 from Streptococcus uberis (strain ATCC BAA-854 / 0140J).